The following is a 210-amino-acid chain: MEAEGSSRKVTRLLRLGVKEDSEEQHDVKAEAFFQAGEGRDEQGAQGQPGVGAVGTEGEGEELNGGKGHFGPGAPGPMGDGDKDSGTRAGGVEQEQNEPVAEGTESQENGNPGGRQMPLQGSRFAQHRLRELESILQRTNSFDVPREDLDRLMDACVSRVQNWFKIRRAAARRTRRRATPVPEHFRGTFECPACRGVRWGERCPFATPRF.

Positions 1–119 (MEAEGSSRKV…GNPGGRQMPL (119 aa)) are disordered. The span at 17–30 (GVKEDSEEQHDVKA) shows a compositional bias: basic and acidic residues. Residues 47–79 (GQPGVGAVGTEGEGEELNGGKGHFGPGAPGPMG) show a composition bias toward gly residues. The homeobox; atypical DNA-binding region spans 117 to 175 (MPLQGSRFAQHRLRELESILQRTNSFDVPREDLDRLMDACVSRVQNWFKIRRAAARRTR).

The protein localises to the nucleus. Its function is as follows. Transcription factor required for differentiation of embryonic stem cells (ESCs) into primordial germ cells. The chain is Homeobox protein Rhox5 (Rhox5) from Mus musculus (Mouse).